The following is a 142-amino-acid chain: Protein CPn_0742/CP_0003/CPj0742/CpB0770 (142 aa).

The interval 115–142 (LHPTKESKRPKQKLSSTKKNKKKNWIPL) is disordered. Positions 124-142 (PKQKLSSTKKNKKKNWIPL) are enriched in basic residues.

It belongs to the chlamydial CPn_0742/CT_635/TC_0003 family.

The sequence is that of Protein CPn_0742/CP_0003/CPj0742/CpB0770 from Chlamydia pneumoniae (Chlamydophila pneumoniae).